A 190-amino-acid polypeptide reads, in one-letter code: TATA box-binding protein-like 1 (190 aa).

The protein belongs to the TBP family. In terms of assembly, binds TFIIA and TFIIB.

Its subcellular location is the cytoplasm. The protein localises to the nucleus. Its function is as follows. Part of a specialized transcription system that mediates the transcription of most ribosomal proteins through the 5'-TCT-3' motif which is a core promoter element at these genes. Seems to also mediate the transcription of NF1. Does not bind the TATA box. The protein is TATA box-binding protein-like 1 (TBPL1) of Pongo abelii (Sumatran orangutan).